Consider the following 319-residue polypeptide: Acetyl-coenzyme A carboxylase carboxyl transferase subunit alpha (319 aa).

Residues 35–296 (DLDKELEQLE…KATLLRQLAD (262 aa)) form the CoA carboxyltransferase C-terminal domain.

The protein belongs to the AccA family. Acetyl-CoA carboxylase is a heterohexamer composed of biotin carboxyl carrier protein (AccB), biotin carboxylase (AccC) and two subunits each of ACCase subunit alpha (AccA) and ACCase subunit beta (AccD).

The protein localises to the cytoplasm. The enzyme catalyses N(6)-carboxybiotinyl-L-lysyl-[protein] + acetyl-CoA = N(6)-biotinyl-L-lysyl-[protein] + malonyl-CoA. It functions in the pathway lipid metabolism; malonyl-CoA biosynthesis; malonyl-CoA from acetyl-CoA: step 1/1. Its function is as follows. Component of the acetyl coenzyme A carboxylase (ACC) complex. First, biotin carboxylase catalyzes the carboxylation of biotin on its carrier protein (BCCP) and then the CO(2) group is transferred by the carboxyltransferase to acetyl-CoA to form malonyl-CoA. The sequence is that of Acetyl-coenzyme A carboxylase carboxyl transferase subunit alpha from Vibrio cholerae serotype O1 (strain ATCC 39541 / Classical Ogawa 395 / O395).